A 310-amino-acid polypeptide reads, in one-letter code: tRNA-cytidine(32) 2-sulfurtransferase (310 aa).

Positions 47-52 (SGGKDS) match the PP-loop motif motif. Positions 122, 125, and 213 each coordinate [4Fe-4S] cluster.

Belongs to the TtcA family. As to quaternary structure, homodimer. Requires Mg(2+) as cofactor. [4Fe-4S] cluster serves as cofactor.

Its subcellular location is the cytoplasm. The catalysed reaction is cytidine(32) in tRNA + S-sulfanyl-L-cysteinyl-[cysteine desulfurase] + AH2 + ATP = 2-thiocytidine(32) in tRNA + L-cysteinyl-[cysteine desulfurase] + A + AMP + diphosphate + H(+). It participates in tRNA modification. Functionally, catalyzes the ATP-dependent 2-thiolation of cytidine in position 32 of tRNA, to form 2-thiocytidine (s(2)C32). The sulfur atoms are provided by the cysteine/cysteine desulfurase (IscS) system. The protein is tRNA-cytidine(32) 2-sulfurtransferase of Cronobacter sakazakii (strain ATCC BAA-894) (Enterobacter sakazakii).